We begin with the raw amino-acid sequence, 199 residues long: Securin (199 aa).

Disordered stretches follow at residues 1-23 (MATLIFVDKDNEEPGSRLASKDG) and 58-108 (RKAL…DDAY). Residue Ala2 is modified to N-acetylalanine. Positions 7 to 23 (VDKDNEEPGSRLASKDG) are enriched in basic and acidic residues. The D-box signature appears at 58 to 61 (RKAL). A TEK-box 1 motif is present at residues 68 to 70 (TEK). Over residues 76–85 (KPLQSKQPTL) the composition is skewed to polar residues. Positions 91-93 (TEK) match the TEK-box 2 motif. Ser162 is subject to Phosphoserine. The short motif at 179-192 (PPSALSALDVELPP) is the SH3-binding element.

This sequence belongs to the securin family. Interacts with the caspase-like ESPL1, and prevents its protease activity by covering its active site. Interacts with p53/TP53 and blocks its activity probably by blocking its binding to DNA. Interacts with the Ku 70 kDa subunit of ds-DNA kinase. Interacts with PTTG1IP. Interacts with RPS10 and DNAJA1. Post-translationally, phosphorylated at Ser-162 by CDK1 during mitosis. In terms of processing, phosphorylated in vitro by ds-DNA kinase. Ubiquitinated through 'Lys-11' linkage of ubiquitin moieties by the anaphase promoting complex (APC) at the onset of anaphase, conducting to its degradation. 'Lys-11'-linked ubiquitination is mediated by the E2 ligase UBE2C/UBCH10. Expressed at low level in most tissues, except in adult testis, where it is highly expressed. Expressed in both spermatocytes and spermatids.

The protein localises to the cytoplasm. Its subcellular location is the nucleus. Functionally, regulatory protein, which plays a central role in chromosome stability, in the p53/TP53 pathway, and DNA repair. Probably acts by blocking the action of key proteins. During the mitosis, it blocks Separase/ESPL1 function, preventing the proteolysis of the cohesin complex and the subsequent segregation of the chromosomes. At the onset of anaphase, it is ubiquitinated, conducting to its destruction and to the liberation of ESPL1. Its function is however not limited to a blocking activity, since it is required to activate ESPL1. Negatively regulates the transcriptional activity and related apoptosis activity of p53/TP53. The negative regulation of p53/TP53 may explain the strong transforming capability of the protein when it is overexpressed. May also play a role in DNA repair via its interaction with Ku, possibly by connecting DNA damage-response pathways with sister chromatid separation. This chain is Securin (Pttg1), found in Rattus norvegicus (Rat).